The sequence spans 437 residues: Enolase (437 aa).

Gln162 contributes to the (2R)-2-phosphoglycerate binding site. Residue Glu204 is the Proton donor of the active site. Mg(2+) is bound by residues Asp251, Glu297, and Asp324. Positions 349, 378, 379, and 400 each coordinate (2R)-2-phosphoglycerate. Lys349 serves as the catalytic Proton acceptor.

It belongs to the enolase family. Mg(2+) is required as a cofactor.

Its subcellular location is the cytoplasm. The protein resides in the secreted. It localises to the cell surface. The enzyme catalyses (2R)-2-phosphoglycerate = phosphoenolpyruvate + H2O. It participates in carbohydrate degradation; glycolysis; pyruvate from D-glyceraldehyde 3-phosphate: step 4/5. Catalyzes the reversible conversion of 2-phosphoglycerate (2-PG) into phosphoenolpyruvate (PEP). It is essential for the degradation of carbohydrates via glycolysis. This is Enolase from Prosthecochloris aestuarii (strain DSM 271 / SK 413).